Here is a 280-residue protein sequence, read N- to C-terminus: Large ribosomal subunit protein uL2 (280 aa).

Disordered regions lie at residues 1-59 and 223-280; these read MAIR…GGHK and GVVM…NKKR. A compositionally biased stretch (basic and acidic residues) spans 23–33; it reads ELTRSTPEKSL. 2 stretches are compositionally biased toward basic residues: residues 36-59 and 269-280; these read PLHK…GGHK and VRRRRSNKNKKR.

Belongs to the universal ribosomal protein uL2 family. In terms of assembly, part of the 50S ribosomal subunit. Forms a bridge to the 30S subunit in the 70S ribosome.

In terms of biological role, one of the primary rRNA binding proteins. Required for association of the 30S and 50S subunits to form the 70S ribosome, for tRNA binding and peptide bond formation. It has been suggested to have peptidyltransferase activity; this is somewhat controversial. Makes several contacts with the 16S rRNA in the 70S ribosome. The chain is Large ribosomal subunit protein uL2 from Corynebacterium kroppenstedtii (strain DSM 44385 / JCM 11950 / CIP 105744 / CCUG 35717).